A 360-amino-acid chain; its full sequence is RNA-binding protein 1 (360 aa).

Positions 6–82 (YKLFVGGIAK…KPVDVRKAIR (77 aa)) constitute an RRM 1 domain. Residues 93–113 (MQFLERKVQQMNGGLREMSSN) are a coiled coil. The RRM 2 domain maps to 120-197 (KKIFVGGLSS…KRVEVKRAIP (78 aa)).

Highly expressed in inflorescences and roots. Detected in leaves and seedlings, but not in stems. Expressed in vegetative shoot apex and root meristem, but not in root cap. Detected in flower buds, junction of pedicels, joints of immature siliques and pistil.

In terms of biological role, RNA binding protein. Can also bind in vitro to single-stranded DNA. In Arabidopsis thaliana (Mouse-ear cress), this protein is RNA-binding protein 1 (RBP1).